Reading from the N-terminus, the 206-residue chain is LysM and putative peptidoglycan-binding domain-containing protein 2 (206 aa).

Residues 59–103 (IEHCLSPSDTLQGIALKYGVTMEQIKRANKLFSTDCIFLRKSLNI) form the LysM domain. The tract at residues 184–206 (AQRLKEEDDLRHDGSYATCSYQH) is disordered. Residues 186 to 197 (RLKEEDDLRHDG) are compositionally biased toward basic and acidic residues.

This Xenopus laevis (African clawed frog) protein is LysM and putative peptidoglycan-binding domain-containing protein 2 (lysmd2).